Here is a 233-residue protein sequence, read N- to C-terminus: Probable 2-phosphosulfolactate phosphatase (233 aa).

This sequence belongs to the ComB family. Mg(2+) is required as a cofactor.

The enzyme catalyses (2R)-O-phospho-3-sulfolactate + H2O = (2R)-3-sulfolactate + phosphate. The protein is Probable 2-phosphosulfolactate phosphatase of Symbiobacterium thermophilum (strain DSM 24528 / JCM 14929 / IAM 14863 / T).